The chain runs to 217 residues: Vesicle transport through interaction with t-SNAREs homolog 1A (217 aa).

Residues 1–192 lie on the Cytoplasmic side of the membrane; sequence MDVFERTEQN…TGIARRLATN (192 aa). A coiled-coil region spans residues 36-97; sequence AVREVENDID…AQLQSSNQTN (62 aa). Positions 90-109 are disordered; the sequence is LQSSNQTNSNPWSNAPDDYQ. Positions 123–185 constitute a t-SNARE coiled-coil homology domain; the sequence is SNMLDSTSDR…KSARKIMTGI (63 aa). A helical; Anchor for type IV membrane protein transmembrane segment spans residues 193-213; the sequence is KVILSIIILLLMGIIALIICL. The Vesicular segment spans residues 214–217; the sequence is KWLR.

Belongs to the VTI1 family. In terms of assembly, component of the SNARE complex composed of syn7A, syn8A, vamp7A and vti1A.

Its subcellular location is the membrane. It localises to the cytoplasmic vesicle. The protein resides in the secretory vesicle membrane. The protein localises to the clathrin-coated vesicle membrane. It is found in the endosome membrane. Its subcellular location is the endoplasmic reticulum membrane. Functionally, V-SNARE that mediates vesicle transport pathways through interactions with t-SNAREs on the target membrane. These interactions are proposed to mediate aspects of the specificity of vesicle trafficking and to promote fusion of the lipid bilayers. This chain is Vesicle transport through interaction with t-SNAREs homolog 1A, found in Dictyostelium discoideum (Social amoeba).